The following is a 336-amino-acid chain: Pyridoxal 5'-phosphate synthase subunit PdxS (336 aa).

Asp-30 is a binding site for D-ribose 5-phosphate. The Schiff-base intermediate with D-ribose 5-phosphate role is filled by Lys-87. Gly-159 contributes to the D-ribose 5-phosphate binding site. Residue Arg-171 coordinates D-glyceraldehyde 3-phosphate. Residues Gly-257 and 278 to 279 (GS) each bind D-ribose 5-phosphate.

It belongs to the PdxS/SNZ family. In the presence of PdxT, forms a dodecamer of heterodimers.

The enzyme catalyses aldehydo-D-ribose 5-phosphate + D-glyceraldehyde 3-phosphate + L-glutamine = pyridoxal 5'-phosphate + L-glutamate + phosphate + 3 H2O + H(+). It participates in cofactor biosynthesis; pyridoxal 5'-phosphate biosynthesis. In terms of biological role, catalyzes the formation of pyridoxal 5'-phosphate from ribose 5-phosphate (RBP), glyceraldehyde 3-phosphate (G3P) and ammonia. The ammonia is provided by the PdxT subunit. Can also use ribulose 5-phosphate and dihydroxyacetone phosphate as substrates, resulting from enzyme-catalyzed isomerization of RBP and G3P, respectively. This is Pyridoxal 5'-phosphate synthase subunit PdxS from Thermoplasma acidophilum (strain ATCC 25905 / DSM 1728 / JCM 9062 / NBRC 15155 / AMRC-C165).